A 136-amino-acid chain; its full sequence is Large-conductance mechanosensitive channel (136 aa).

The next 2 membrane-spanning stretches (helical) occupy residues 10–30 and 76–96; these read FAMR…AAFG and GVFI…FMAI.

Belongs to the MscL family. Homopentamer.

The protein resides in the cell inner membrane. Its function is as follows. Channel that opens in response to stretch forces in the membrane lipid bilayer. May participate in the regulation of osmotic pressure changes within the cell. The chain is Large-conductance mechanosensitive channel from Escherichia coli O139:H28 (strain E24377A / ETEC).